The chain runs to 236 residues: 2,3,4,5-tetrahydropyridine-2,6-dicarboxylate N-acetyltransferase (236 aa).

Belongs to the transferase hexapeptide repeat family. DapH subfamily.

The enzyme catalyses (S)-2,3,4,5-tetrahydrodipicolinate + acetyl-CoA + H2O = L-2-acetamido-6-oxoheptanedioate + CoA. Its pathway is amino-acid biosynthesis; L-lysine biosynthesis via DAP pathway; LL-2,6-diaminopimelate from (S)-tetrahydrodipicolinate (acetylase route): step 1/3. Its function is as follows. Catalyzes the transfer of an acetyl group from acetyl-CoA to tetrahydrodipicolinate. In Geobacillus sp. (strain WCH70), this protein is 2,3,4,5-tetrahydropyridine-2,6-dicarboxylate N-acetyltransferase.